We begin with the raw amino-acid sequence, 414 residues long: Esterase FrsA (414 aa).

Belongs to the FrsA family.

It catalyses the reaction a carboxylic ester + H2O = an alcohol + a carboxylate + H(+). Its function is as follows. Catalyzes the hydrolysis of esters. The polypeptide is Esterase FrsA (Klebsiella pneumoniae (strain 342)).